We begin with the raw amino-acid sequence, 277 residues long: Inorganic pyrophosphatase (277 aa).

Position 80 (Arg-80) interacts with diphosphate. Residues Asp-117, Asp-122, and Asp-154 each coordinate Mg(2+).

It belongs to the PPase family. Mg(2+) is required as a cofactor.

The protein localises to the cytoplasm. The catalysed reaction is diphosphate + H2O = 2 phosphate + H(+). Involved in osmoadaptation. The chain is Inorganic pyrophosphatase (IPP1) from Encephalitozoon cuniculi (strain GB-M1) (Microsporidian parasite).